We begin with the raw amino-acid sequence, 217 residues long: Thiamine-phosphate synthase (217 aa).

4-amino-2-methyl-5-(diphosphooxymethyl)pyrimidine-binding positions include 37–41 and N72; that span reads QFREK. The Mg(2+) site is built by D73 and D92. A 4-amino-2-methyl-5-(diphosphooxymethyl)pyrimidine-binding site is contributed by S110. A 2-[(2R,5Z)-2-carboxy-4-methylthiazol-5(2H)-ylidene]ethyl phosphate-binding site is contributed by 136 to 138; the sequence is TVS. Position 139 (K139) interacts with 4-amino-2-methyl-5-(diphosphooxymethyl)pyrimidine. 2-[(2R,5Z)-2-carboxy-4-methylthiazol-5(2H)-ylidene]ethyl phosphate contacts are provided by residues G168 and 188–189; that span reads IS.

The protein belongs to the thiamine-phosphate synthase family. It depends on Mg(2+) as a cofactor.

The catalysed reaction is 2-[(2R,5Z)-2-carboxy-4-methylthiazol-5(2H)-ylidene]ethyl phosphate + 4-amino-2-methyl-5-(diphosphooxymethyl)pyrimidine + 2 H(+) = thiamine phosphate + CO2 + diphosphate. It carries out the reaction 2-(2-carboxy-4-methylthiazol-5-yl)ethyl phosphate + 4-amino-2-methyl-5-(diphosphooxymethyl)pyrimidine + 2 H(+) = thiamine phosphate + CO2 + diphosphate. It catalyses the reaction 4-methyl-5-(2-phosphooxyethyl)-thiazole + 4-amino-2-methyl-5-(diphosphooxymethyl)pyrimidine + H(+) = thiamine phosphate + diphosphate. It functions in the pathway cofactor biosynthesis; thiamine diphosphate biosynthesis; thiamine phosphate from 4-amino-2-methyl-5-diphosphomethylpyrimidine and 4-methyl-5-(2-phosphoethyl)-thiazole: step 1/1. Condenses 4-methyl-5-(beta-hydroxyethyl)thiazole monophosphate (THZ-P) and 2-methyl-4-amino-5-hydroxymethyl pyrimidine pyrophosphate (HMP-PP) to form thiamine monophosphate (TMP). This is Thiamine-phosphate synthase from Anoxybacillus flavithermus (strain DSM 21510 / WK1).